Consider the following 451-residue polypeptide: Trigger factor (451 aa).

A PPIase FKBP-type domain is found at 165–250 (DDKLTIDFEG…LHQIQVREAL (86 aa)).

This sequence belongs to the FKBP-type PPIase family. Tig subfamily.

The protein localises to the cytoplasm. The catalysed reaction is [protein]-peptidylproline (omega=180) = [protein]-peptidylproline (omega=0). In terms of biological role, involved in protein export. Acts as a chaperone by maintaining the newly synthesized protein in an open conformation. Functions as a peptidyl-prolyl cis-trans isomerase. This Helicobacter pylori (strain P12) protein is Trigger factor.